Reading from the N-terminus, the 204-residue chain is Methylthioribulose-1-phosphate dehydratase (204 aa).

Residues His94 and His96 each contribute to the Zn(2+) site.

It belongs to the aldolase class II family. MtnB subfamily. Requires Zn(2+) as cofactor.

It carries out the reaction 5-(methylsulfanyl)-D-ribulose 1-phosphate = 5-methylsulfanyl-2,3-dioxopentyl phosphate + H2O. It participates in amino-acid biosynthesis; L-methionine biosynthesis via salvage pathway; L-methionine from S-methyl-5-thio-alpha-D-ribose 1-phosphate: step 2/6. Its function is as follows. Catalyzes the dehydration of methylthioribulose-1-phosphate (MTRu-1-P) into 2,3-diketo-5-methylthiopentyl-1-phosphate (DK-MTP-1-P). The polypeptide is Methylthioribulose-1-phosphate dehydratase (Citrobacter koseri (strain ATCC BAA-895 / CDC 4225-83 / SGSC4696)).